The following is a 68-amino-acid chain: Serine palmitoyltransferase small subunit A (68 aa).

Topologically, residues Met-1–Gln-9 are cytoplasmic. Residues Leu-10–Leu-26 traverse the membrane as a helical segment. Residues Glu-27 to Arg-31 are Lumenal-facing. Residues Thr-32 to Pro-54 traverse the membrane as a helical segment. At Gln-55–Gln-68 the chain is on the cytoplasmic side.

Belongs to the SPTSS family. SPTSSA subfamily. In terms of assembly, component of the serine palmitoyltransferase (SPT) complex, which is composed of SPTLC1, SPTLC2 or SPTLC3 and SPTSSA or SPTSSB. The heterodimer consisting of SPTLC1 and SPTLC2/SPTLC3 forms the catalytic core of the enzyme, while SPTSSA or SPTSSB subunits determine substrate specificity. SPT also interacts with ORMDL proteins, especially ORMDL3, which negatively regulate SPT activity in the presence of ceramides.

It is found in the endoplasmic reticulum membrane. It participates in lipid metabolism; sphingolipid metabolism. Component of the serine palmitoyltransferase multisubunit enzyme (SPT) that catalyzes the initial and rate-limiting step in sphingolipid biosynthesis by condensing L-serine and activated acyl-CoA (most commonly palmitoyl-CoA) to form long-chain bases. The SPT complex is composed of SPTLC1, SPTLC2 or SPTLC3 and SPTSSA or SPTSSB. Within this complex, the heterodimer consisting of SPTLC1 and SPTLC2/SPTLC3 forms the catalytic core. Within the SPT complex, SPTSSA stimulates the catalytic activity and plays a role in substrate specificity, which depends upon the overall complex composition. The SPTLC1-SPTLC2-SPTSSA complex shows a strong preference for C16-CoA substrate, while the SPTLC1-SPTLC3-SPTSSA isozyme uses both C14-CoA and C16-CoA as substrates, with a slight preference for C14-CoA. Independently of its action as a SPT component, may be involved in MBOAT7 localization to mitochondria-associated membranes, a membrane bridge between the endoplasmic reticulum and mitochondria, may hence affect MBOAT7-catalyzed incorporation of arachidonic acid into phosphatidylinositol. This is Serine palmitoyltransferase small subunit A (sptssa) from Danio rerio (Zebrafish).